A 356-amino-acid chain; its full sequence is Phospho-N-acetylmuramoyl-pentapeptide-transferase (356 aa).

A run of 10 helical transmembrane segments spans residues 27–47 (AAVA…ILML), 73–93 (TMGG…WMDL), 97–117 (FVWA…LDDY), 134–154 (LLVE…RTGT), 163–183 (GIVI…IVGF), 195–215 (GLAT…VYLS), 232–252 (AGEL…FLWF), 258–278 (AVFM…TIAV), 285–305 (VLVL…IQVF), and 333–353 (TVVI…LATL).

The protein belongs to the glycosyltransferase 4 family. MraY subfamily. The cofactor is Mg(2+).

It localises to the cell inner membrane. The catalysed reaction is UDP-N-acetyl-alpha-D-muramoyl-L-alanyl-gamma-D-glutamyl-meso-2,6-diaminopimeloyl-D-alanyl-D-alanine + di-trans,octa-cis-undecaprenyl phosphate = di-trans,octa-cis-undecaprenyl diphospho-N-acetyl-alpha-D-muramoyl-L-alanyl-D-glutamyl-meso-2,6-diaminopimeloyl-D-alanyl-D-alanine + UMP. It functions in the pathway cell wall biogenesis; peptidoglycan biosynthesis. Functionally, catalyzes the initial step of the lipid cycle reactions in the biosynthesis of the cell wall peptidoglycan: transfers peptidoglycan precursor phospho-MurNAc-pentapeptide from UDP-MurNAc-pentapeptide onto the lipid carrier undecaprenyl phosphate, yielding undecaprenyl-pyrophosphoryl-MurNAc-pentapeptide, known as lipid I. The sequence is that of Phospho-N-acetylmuramoyl-pentapeptide-transferase from Sphingopyxis alaskensis (strain DSM 13593 / LMG 18877 / RB2256) (Sphingomonas alaskensis).